A 434-amino-acid polypeptide reads, in one-letter code: Glutamate-1-semialdehyde 2,1-aminomutase (434 aa).

Lys-271 carries the N6-(pyridoxal phosphate)lysine modification.

The protein belongs to the class-III pyridoxal-phosphate-dependent aminotransferase family. HemL subfamily. As to quaternary structure, homodimer. Pyridoxal 5'-phosphate serves as cofactor.

It localises to the cytoplasm. The enzyme catalyses (S)-4-amino-5-oxopentanoate = 5-aminolevulinate. The protein operates within porphyrin-containing compound metabolism; protoporphyrin-IX biosynthesis; 5-aminolevulinate from L-glutamyl-tRNA(Glu): step 2/2. It participates in porphyrin-containing compound metabolism; chlorophyll biosynthesis. This is Glutamate-1-semialdehyde 2,1-aminomutase from Prochlorococcus marinus (strain MIT 9312).